The chain runs to 213 residues: Phosphatidylserine decarboxylase proenzyme (213 aa).

Ser180 acts as the Schiff-base intermediate with substrate; via pyruvic acid in catalysis. Position 180 is a pyruvic acid (Ser); by autocatalysis (Ser180).

It belongs to the phosphatidylserine decarboxylase family. PSD-A subfamily. As to quaternary structure, heterodimer of a large membrane-associated beta subunit and a small pyruvoyl-containing alpha subunit. Pyruvate is required as a cofactor. Post-translationally, is synthesized initially as an inactive proenzyme. Formation of the active enzyme involves a self-maturation process in which the active site pyruvoyl group is generated from an internal serine residue via an autocatalytic post-translational modification. Two non-identical subunits are generated from the proenzyme in this reaction, and the pyruvate is formed at the N-terminus of the alpha chain, which is derived from the carboxyl end of the proenzyme. The post-translation cleavage follows an unusual pathway, termed non-hydrolytic serinolysis, in which the side chain hydroxyl group of the serine supplies its oxygen atom to form the C-terminus of the beta chain, while the remainder of the serine residue undergoes an oxidative deamination to produce ammonia and the pyruvoyl prosthetic group on the alpha chain.

Its subcellular location is the cell membrane. It carries out the reaction a 1,2-diacyl-sn-glycero-3-phospho-L-serine + H(+) = a 1,2-diacyl-sn-glycero-3-phosphoethanolamine + CO2. It functions in the pathway phospholipid metabolism; phosphatidylethanolamine biosynthesis; phosphatidylethanolamine from CDP-diacylglycerol: step 2/2. Functionally, catalyzes the formation of phosphatidylethanolamine (PtdEtn) from phosphatidylserine (PtdSer). The protein is Phosphatidylserine decarboxylase proenzyme of Carboxydothermus hydrogenoformans (strain ATCC BAA-161 / DSM 6008 / Z-2901).